The primary structure comprises 222 residues: MHIMEGYLPMEWAIVWYIISAIVVGYGILNLNKVLKNNPEAKPLLAISGAFMFVLSSLKLPSVSGSCSHPTGNGLGAILFGPAITSVLATIVLLFQALVLAHGGISTLGANIFSMGIMGPFVGYLVFKALRGKLNITWVVMLTAIFADWATYLTTSIQLALAFPVPDFMSSFTEFGTIFAITQIPLAIAEGLITALLWDYLSELRPELFEKITNIKKGGNNE.

Transmembrane regions (helical) follow at residues 8 to 28, 43 to 63, 75 to 95, 107 to 127, 134 to 154, and 178 to 198; these read LPMEWAIVWYIISAIVVGYGI, PLLAISGAFMFVLSSLKLPSV, LGAILFGPAITSVLATIVLLF, TLGANIFSMGIMGPFVGYLVF, LNITWVVMLTAIFADWATYLT, and IFAITQIPLAIAEGLITALLW.

Belongs to the CbiM family. In terms of assembly, forms an energy-coupling factor (ECF) transporter complex composed of an ATP-binding protein (A component, CbiO), a transmembrane protein (T component, CbiQ) and 2 possible substrate-capture proteins (S components, CbiM and CbiN) of unknown stoichimetry.

It is found in the cell membrane. It functions in the pathway cofactor biosynthesis; adenosylcobalamin biosynthesis. Its function is as follows. Part of the energy-coupling factor (ECF) transporter complex CbiMNOQ involved in cobalt import. This is Putative cobalt transport protein CbiM from Methanococcus voltae (strain ATCC BAA-1334 / A3).